Reading from the N-terminus, the 112-residue chain is UPF0212 protein Mhun_0078 (112 aa).

Belongs to the UPF0212 family.

The chain is UPF0212 protein Mhun_0078 from Methanospirillum hungatei JF-1 (strain ATCC 27890 / DSM 864 / NBRC 100397 / JF-1).